The primary structure comprises 435 residues: GPI-anchor transamidase component PIGU (435 aa).

Residues 1-3 (MAA) lie on the Cytoplasmic side of the membrane. Residues 4-22 (PLALVLVVAVTVRAALFRS) traverse the membrane as a helical segment. Topologically, residues 23–78 (SLAEFISERVEVVSPLSSWKRVVEGLSLLDLGVSPYSGAVFHETPLIIYLFHFLID) are lumenal. The chain crosses the membrane as a helical span at residues 79–99 (YAELVFMITDALTAIALYFAI). The Cytoplasmic portion of the chain corresponds to 100–136 (QDFNKVVFKKQKLLLELDQYAPDVAELIRTPMEMRYI). 4 helical membrane passes run 137 to 158 (PLKV…VAKS), 159 to 178 (TCAI…IKGS), 179 to 194 (VFLS…YQTL), and 195 to 205 (YPVTLFAPGLL). The Cytoplasmic segment spans residues 206-222 (YLLQRQYIPVKVKSKAF). K216 provides a ligand contact to a cardiolipin. The helical transmembrane segment at 223 to 244 (WIFSWEYAMMYIGSLVVIVCLS) threads the bilayer. Topologically, residues 245-286 (FFLLSSWDFIPAVYGFILSVPDLTPNIGLFWYFFAEMFEHFS) are lumenal. Residues 287–306 (LFFVCVFQINVFFYTVPLAI) form a helical membrane-spanning segment. The Cytoplasmic portion of the chain corresponds to 307 to 311 (KLKEH). K309 contributes to the a cardiolipin binding site. 2 consecutive transmembrane segments (helical) span residues 312–331 (PIFF…SYPT) and 332–345 (VGDV…FPVW). At 346-354 (NHLYRFLRN) the chain is on the cytoplasmic side. Residues 355-372 (VFVLTCIIVVCSLLFPVL) form a helical membrane-spanning segment. The Lumenal portion of the chain corresponds to 373–384 (WHLWIYAGSANS). A 2-acyl-6-[6-phosphoethanolamine-alpha-D-mannosyl-(1-&gt;2)-6-phosphoethanolamine-alpha-D-mannosyl-(1-&gt;6)-2-phosphoethanolamine-alpha-D-mannosyl-(1-&gt;4)-alpha-D-glucosaminyl]-1-(1-radyl,2-acyl-sn-glycero-3-phospho)-1D-myo-inositol is bound by residues N383 and N385. A helical membrane pass occupies residues 385 to 406 (NFFYAITLTFNVGQILLISDYF). Over 407 to 435 (YAFLRREYYLTHGLYLTAKDGTEAMLVLK) the chain is Cytoplasmic.

This sequence belongs to the PIGU family. As to quaternary structure, heteropentamer. Part of the GPI-anchor transamidase complex, consisting of PIGK, PIGT, PIGS, PIGU and GAA1.

Its subcellular location is the endoplasmic reticulum membrane. It functions in the pathway glycolipid biosynthesis; glycosylphosphatidylinositol-anchor biosynthesis. Functionally, component of the glycosylphosphatidylinositol-anchor (GPI-anchor) transamidase (GPI-T) complex that catalyzes the formation of the linkage between a proprotein and a GPI-anchor and participates in GPI anchored protein biosynthesis. Binds the lipid portion of GPI-anchor. May act as an organizer in the transmembrane layer to recruit other subunits, and thus is essential for assembly of the complex. The protein is GPI-anchor transamidase component PIGU of Cricetulus griseus (Chinese hamster).